The sequence spans 138 residues: ATP synthase epsilon chain (138 aa).

It belongs to the ATPase epsilon chain family. In terms of assembly, F-type ATPases have 2 components, CF(1) - the catalytic core - and CF(0) - the membrane proton channel. CF(1) has five subunits: alpha(3), beta(3), gamma(1), delta(1), epsilon(1). CF(0) has three main subunits: a, b and c.

The protein localises to the cell membrane. In terms of biological role, produces ATP from ADP in the presence of a proton gradient across the membrane. This is ATP synthase epsilon chain from Streptococcus equinus (Streptococcus bovis).